Reading from the N-terminus, the 1135-residue chain is Glutamate receptor ionotropic, NMDA 3A (1135 aa).

An N-terminal signal peptide occupies residues methionine 1–leucine 23. The Extracellular portion of the chain corresponds to valine 24 to histidine 674. The interval threonine 60 to alanine 117 is disordered. 10 N-linked (GlcNAc...) asparagine glycosylation sites follow: asparagine 145, asparagine 264, asparagine 275, asparagine 285, asparagine 296, asparagine 300, asparagine 426, asparagine 439, asparagine 549, and asparagine 565. Disulfide bonds link cysteine 537–cysteine 575 and cysteine 543–cysteine 576. Residues serine 631, serine 633, and arginine 638 each contribute to the glycine site. D-serine-binding residues include serine 633 and arginine 638. Residues tryptophan 675–leucine 694 traverse the membrane as a helical segment. The Cytoplasmic portion of the chain corresponds to tyrosine 695 to serine 715. Positions phenylalanine 716–leucine 727 form an intramembrane region, discontinuously helical. Residues phenylalanine 728–threonine 741 lie on the Cytoplasmic side of the membrane. A helical transmembrane segment spans residues glycine 742–threonine 761. The Extracellular segment spans residues alanine 762 to serine 932. Serine 801 provides a ligand contact to glycine. Residues serine 801, alanine 802, and aspartate 845 each coordinate D-serine. Aspartate 845 is a glycine binding site. Cysteine 859 and cysteine 913 form a disulfide bridge. Residue asparagine 886 is glycosylated (N-linked (GlcNAc...) asparagine). The helical transmembrane segment at glycine 933–threonine 948 threads the bilayer. The Cytoplasmic portion of the chain corresponds to threonine 949–serine 1135. The interval glycine 951 to phenylalanine 987 is PPP2CB binding site. A coiled-coil region spans residues threonine 1080–threonine 1129. The segment at asparagine 1082 to leucine 1115 is GIT1-binding.

Belongs to the glutamate-gated ion channel (TC 1.A.10.1) family. NR3A/GRIN3A subfamily. Heterotetramer. Forms heterotetrameric channels composed of two GluN1/zeta subunits (GRIN1), and two identical GluN3 subunits (GRIN3A or GRIN3B) (in vitro). Can also form heterotetrameric channels that contain at least two GluN1 subunits and at least a combination of one GluN2 and one GluN3 subunits (in vitro). Does not form functional homomeric channels. Found in a complex with GRIN1, GRIN2A or GRIN2B and PPP2CB. Probably interacts with PPP2CB. No complex with PPP2CB is detected when NMDARs are stimulated by NMDA. Interacts (via C-terminus) with GIT1, but not with GRIA1/GluA1, nor with synaptophysin/SYP; this interaction competes with GIT1 interaction with ARHGEF7/beta-PIX. In terms of processing, N-glycosylated. In terms of tissue distribution, isoform 1 and isoform 2 are expressed in olfactory bulb, frontal occipital, entorhinal and pyriform cortices, hippocampus, striatum, thalamus, cerebellum and spinal cord.

The protein resides in the cell membrane. It localises to the postsynaptic cell membrane. Its subcellular location is the postsynaptic density. It catalyses the reaction Ca(2+)(in) = Ca(2+)(out). It carries out the reaction Na(+)(in) = Na(+)(out). Its activity is regulated as follows. Excitatory glycine receptors are inhibited by D-serine at a concentrion of 10uM. Its function is as follows. Component of a non-conventional N-methyl-D-aspartate (NMDA) receptors (NMDARs) that function as heterotetrameric, ligand-gated cation channels with low calcium permeability and low voltage-dependent block by Mg(2+). During the development of neural circuits, participates in the synaptic refinement period, restricting spine maturation and growth. Forms glutamatergic receptor complexes with GluN1 and GluN2 subunits which are activated by glycine binding to the GluN1 and GluN3 subunits and L-glutamate binding to GluN2 subunits. Forms excitatory glycinergic receptor complexes with GluN1 alone which are activated by glycine binding to the GluN1 and GluN3 subunits. GluN3A subunit also binds D-serine. Each GluN3 subunit confers differential attributes to channel properties, including activation, deactivation and desensitization kinetics, pH sensitivity, Ca2(+) permeability, and binding to allosteric modulators. By competing with GIT1 interaction with ARHGEF7/beta-PIX, may reduce GIT1/ARHGEF7-regulated local activation of RAC1, hence affecting signaling and limiting the maturation and growth of inactive synapses. The protein is Glutamate receptor ionotropic, NMDA 3A of Rattus norvegicus (Rat).